Reading from the N-terminus, the 619-residue chain is Secretogranin-2 (619 aa).

Residues 1-30 (MTESKAYRFGAVLLLIHLIFLVPGTEAASF) form the signal peptide. Y153 bears the Sulfotyrosine mark. Phosphoserine is present on residues S176 and S270. Residues 247–307 (VGGEDWSPME…RKESKDQLSE (61 aa)) are disordered. Composition is skewed to basic and acidic residues over residues 255–286 (MEEK…EMKR) and 295–307 (EGNR…QLSE). 4 positions are modified to phosphoserine: S434, S534, S557, and S558.

This sequence belongs to the chromogranin/secretogranin protein family. Interacts with Secretogranin III/SCG3. In terms of tissue distribution, brain. Expression in the pituitary is restricted to the anterior lobe. Expression in the hypothalamus is observed in the neuronal cells and neurons of arcuate nucleus, supraoptic nucleus and median eminence (at protein level).

It is found in the secreted. Functionally, neuroendocrine protein of the granin family that regulates the biogenesis of secretory granules. This is Secretogranin-2 (Scg2) from Rattus norvegicus (Rat).